Reading from the N-terminus, the 345-residue chain is Methylthioribose-1-phosphate isomerase 2 (345 aa).

Substrate is bound by residues 47 to 49 (RGA), Arg88, and Gln194. Asp235 (proton donor) is an active-site residue. 245–246 (NK) is a binding site for substrate.

Belongs to the eIF-2B alpha/beta/delta subunits family. MtnA subfamily.

It catalyses the reaction 5-(methylsulfanyl)-alpha-D-ribose 1-phosphate = 5-(methylsulfanyl)-D-ribulose 1-phosphate. It participates in amino-acid biosynthesis; L-methionine biosynthesis via salvage pathway; L-methionine from S-methyl-5-thio-alpha-D-ribose 1-phosphate: step 1/6. In terms of biological role, catalyzes the interconversion of methylthioribose-1-phosphate (MTR-1-P) into methylthioribulose-1-phosphate (MTRu-1-P). This is Methylthioribose-1-phosphate isomerase 2 from Pseudothermotoga lettingae (strain ATCC BAA-301 / DSM 14385 / NBRC 107922 / TMO) (Thermotoga lettingae).